Reading from the N-terminus, the 37-residue chain is Potassium channel toxin alpha-KTx 11.1 (37 aa).

Disulfide bonds link cysteine 8–cysteine 27, cysteine 13–cysteine 33, and cysteine 17–cysteine 35.

This sequence belongs to the short scorpion toxin superfamily. Potassium channel inhibitor family. Alpha-KTx 11 subfamily. As to expression, expressed by the venom gland.

It is found in the secreted. Functionally, binds and inhibits voltage-sensitive potassium channels. Inhibits the vertebrate potassium channels Kv1.1/KCNA1, Kv1.2/KCNA2 and Kv1.3/KCNA3 with low affinity. Also weakly inhibits Kv7.1/KCNQ1 (10 uM of the toxin inhibits currents by 21.43%). The polypeptide is Potassium channel toxin alpha-KTx 11.1 (Parabuthus villosus (Black hairy thick-tailed scorpion)).